The following is a 332-amino-acid chain: Aquaporin-7-1 (332 aa).

Topologically, residues 1 to 66 (MSGQHQITEQ…RHAIRMPMAE (66 aa)) are cytoplasmic. The chain crosses the membrane as a helical span at residues 67–87 (FFGVALLIIFGAGSACQVVLS). Residues 88-100 (TNPNVASSDRGSF) are Extracellular-facing. The chain crosses the membrane as a helical span at residues 101–121 (LSINLGWAIGIAMGAWVSGGI). Residues 122-144 (SGGHINPAITIAMATYRGFPWRR) lie on the Cytoplasmic side of the membrane. The short motif at 127-129 (NPA) is the NPA 1 element. Residues 145-165 (VPSYIFAQVLGGVVGAALVYA) traverse the membrane as a helical segment. The Extracellular portion of the chain corresponds to 166–199 (NYIHAIDIFEGGRHVRTQATASLFATYALPYMTQ). A helical membrane pass occupies residues 200–220 (VSCFFSEFLATAVLSMMVLAL). Residues 221–230 (TDNRNGAPTN) lie on the Cytoplasmic side of the membrane. Residues 231 to 251 (GLLPFALFVLFIGLGASLGME) form a helical membrane-spanning segment. The Extracellular segment spans residues 252–283 (TAYALNPARDFGPRLFLAMSGYGKALFNYRSQ). The NPA 2 motif lies at 257–259 (NPA). The helical transmembrane segment at 284–304 (YWLWAPIIAPVLGAQAGGLLY) threads the bilayer. Over 305 to 332 (DTFLYDGDNSPIKWRRASSQECQLAEVV) the chain is Cytoplasmic.

Belongs to the MIP/aquaporin (TC 1.A.8) family.

The protein localises to the membrane. It carries out the reaction H2O(in) = H2O(out). Water channel required to facilitate the transport of water across membranes. Does not mediate the transport carbon dioxide across the membrane. The chain is Aquaporin-7-1 from Laccaria bicolor (Bicoloured deceiver).